The primary structure comprises 458 residues: MPLSEDTIKAVEATADLVAAQGLDFTRAFYERMLTRNEELKDVFNLSHQRDLRQPKALLDSLVAYARSIRKINELHELQEQGLPVPAERLAELQGFFAVAERIAHKHASVGIQPAQYQIVGAHLLATIEERVTADKAILAAWSKAYDFLAHLFVRREEEIYTETESSEGGWRQTRSFRVEEKAQITERIFRFRLVPAEKGTAVALHKPGQYLAVFVRDPRLSPHRQIRQYSITSAPNHTYYEIAVHRDKQATVSGYLHDHVAVGDLLKLAPPYGDFFLEYREPGGQAADGQPSPEPLALHGGAVNFAAERMTPIVLISGGIGQTPLLSILRFLAEKEGQAAIRPIFWIHAAHDSRARAFKAEVDAIKVTDLPGLRTTTFLSEVDETMDKKGEDYDFAGRISLDRVPGLAELEADGANPHYFFVGPAGFMVAVEQQLKAWSVPEDRIHFEMFGPFKPLQ.

Residues 2-158 (PLSEDTIKAV…LAHLFVRREE (157 aa)) enclose the Globin domain. Residue His107 coordinates heme b. Active-site charge relay system residues include Tyr117 and Glu157. Residues 169–457 (GGWRQTRSFR…FEMFGPFKPL (289 aa)) are reductase. The FAD-binding FR-type domain maps to 172 to 279 (RQTRSFRVEE…APPYGDFFLE (108 aa)). FAD contacts are provided by residues Tyr211 and 228–231 (RQYS). 320–325 (GIGQTP) contacts NADP(+). 450–453 (MFGP) lines the FAD pocket.

It belongs to the globin family. Two-domain flavohemoproteins subfamily. The protein in the C-terminal section; belongs to the flavoprotein pyridine nucleotide cytochrome reductase family. As to quaternary structure, monomer. Requires heme b as cofactor. It depends on FAD as a cofactor.

It carries out the reaction 2 nitric oxide + NADPH + 2 O2 = 2 nitrate + NADP(+) + H(+). It catalyses the reaction 2 nitric oxide + NADH + 2 O2 = 2 nitrate + NAD(+) + H(+). Functionally, flavohemoprotein involved in nitric oxide (NO) detoxification in an aerobic process, termed nitric oxide dioxygenase (NOD) reaction that utilizes O(2) and NAD(P)H to convert NO to nitrate, which protects the protozoan parasite from various noxious nitrogen compounds. Therefore, plays a central role in the inducible response to nitrosative stress. May also be involved in O(2) detoxification. In Giardia intestinalis (strain ATCC 50581 / GS clone H7) (Giardia lamblia), this protein is Flavohemoprotein (hmpA).